The following is a 293-amino-acid chain: MSKLYGSIEAGGTKFVCAVGDENFQILEKVQFPTTTPYETIEKTVAFFKKFEADLASVAIGSFGPIDIDQNSDTYGYITSTPKPNWANVDFVGLISKDFKIPFYFTTDVNSSAYGETIARSNVKSLVYYTIGTGIGAGTIQNGEFIGGMGHTEAGHVYMAPHPNDVHHGFVGTCPFHKGCLEGLAAGPSLEARTGIRGELIEQNSEVWDIQAYYIAQAAIQATVLYRPQVIVFGGGVMAQEHMLNRVREKFTSLLNDYLPVPDVKDYIVTPAVAENGSATLGNLALAKKIAAR.

T133 provides a ligand contact to ATP. Residues H156, C174, H177, and C180 each coordinate Zn(2+). ATP contacts are provided by residues P188 and 236 to 240; that span reads GVMAQ.

This sequence belongs to the ROK (NagC/XylR) family. The cofactor is Mg(2+).

It carries out the reaction D-fructose + ATP = D-fructose 6-phosphate + ADP + H(+). Its activity is regulated as follows. Inhibition by zinc ions. This chain is Fructokinase (scrK), found in Streptococcus mutans serotype c (strain ATCC 700610 / UA159).